Reading from the N-terminus, the 329-residue chain is G-protein coupled bile acid receptor 1 (329 aa).

Over 1–15 (MMTPNSTELSAIPMG) the chain is Extracellular. Asn-5 is a glycosylation site (N-linked (GlcNAc...) asparagine). The chain crosses the membrane as a helical span at residues 16-36 (VLGLSLALASLIVIANLLLAL). Residues 37–49 (GIALDRHLRSPPA) lie on the Cytoplasmic side of the membrane. A helical transmembrane segment spans residues 50 to 70 (GCFFLSLLLAGLLTGLALPML). At 71 to 84 (PGLWSRNHQGYWSC) the chain is on the extracellular side. A disulfide bridge links Cys-84 with Cys-154. Residues 85–105 (LLLHLTPNFCFLSLLANLLLV) traverse the membrane as a helical segment. At 106–124 (HGERYMAVLQPLRPHGSVR) the chain is on the cytoplasmic side. Residues 125–145 (LALFLTWVSSLFFASLPALGW) traverse the membrane as a helical segment. Residues 146-164 (NHWSPDANCSSQAVFPAPY) lie on the Extracellular side of the membrane. The N-linked (GlcNAc...) asparagine glycan is linked to Asn-153. A helical transmembrane segment spans residues 165–185 (LYLEVYGLLLPAVGATALLSV). The Cytoplasmic segment spans residues 186-229 (RVLATAHRQLCEIRRLERAVCRDVPSTLARALTWRQARAQAGAT). A helical transmembrane segment spans residues 230-250 (LLFLLCWGPYVATLLLSVLAY). The Extracellular segment spans residues 251–260 (ERRPPLGPGT). A helical membrane pass occupies residues 261–281 (LLSLISLGSTSAAAVPVAMGL). The Cytoplasmic segment spans residues 282 to 329 (GDQRYTAPWRTAAQRCLRVLRGRAKRDNPGPSTAYHTSSQCSIDLDLN).

The protein belongs to the G-protein coupled receptor 1 family.

The protein localises to the cell membrane. Receptor for bile acid. Bile acid-binding induces its internalization, activation of extracellular signal-regulated kinase and intracellular cAMP production. May be involved in the suppression of macrophage functions by bile acids. Involved in bile acid promoted GLP1R secretion. The sequence is that of G-protein coupled bile acid receptor 1 (Gpbar1) from Mus musculus (Mouse).